A 378-amino-acid polypeptide reads, in one-letter code: Zinc finger protein DPF3 (378 aa).

A Glycyl lysine isopeptide (Lys-Gly) (interchain with G-Cter in SUMO2) cross-link involves residue Lys-99. The interval 146–193 is disordered; sequence LENDENVEEGNEEEDLEEDVPKRKNRTRGRARGSAGGRRRHDAASQED. Residues 148 to 163 show a composition bias toward acidic residues; sequence NDENVEEGNEEEDLEE. Over residues 168-186 the composition is skewed to basic residues; the sequence is RKNRTRGRARGSAGGRRRH. A C2H2-type zinc finger spans residues 198–221; it reads YVCDICGKRYKNRPGLSYHYAHTH. Residues 225–254 form a disordered region; sequence EEGDEAQDQETRSPPNHRNENHRPQKGPDG. 2 PHD-type zinc fingers span residues 259–319 and 316–366; these read NNYC…CKSC and CKSC…CWEL. The interaction with HDGFL2 stretch occupies residues 317–332; sequence KSCILCGTSENDDQLL. A Phosphoserine modification is found at Gly-323.

The protein belongs to the requiem/DPF family. In terms of assembly, component of the BAF complex, which includes at least actin (ACTB), ARID1A, ARID1B/BAF250, SMARCA2, SMARCA4/BRG1/BAF190A, ACTL6A/BAF53, ACTL6B/BAF53B, SMARCE1/BAF57, SMARCC1/BAF155, SMARCC2/BAF170, SMARCB1/SNF5/INI1, and one or more of SMARCD1/BAF60A, SMARCD2/BAF60B, or SMARCD3/BAF60C. In muscle cells, the BAF complex also contains DPF3. Interacts with acetylated histones H3 and H4. Component of neuron-specific chromatin remodeling complex (nBAF complex) composed of at least, ARID1A/BAF250A or ARID1B/BAF250B, SMARCD1/BAF60A, SMARCD3/BAF60C, SMARCA2/BRM/BAF190B, SMARCA4/BRG1/BAF190A, SMARCB1/BAF47, SMARCC1/BAF155, SMARCE1/BAF57, SMARCC2/BAF170, DPF1/BAF45B, DPF3/BAF45C, ACTL6B/BAF53B and actin. Interacts with HDGFL2. Interacts with SMARCA4/BRG1/BAF190A, SMARCC1/BAF155 and SMARCD1/BAF60A. In terms of tissue distribution, expressed in the heart and somites. Expressed in cerebellum and spinal cord, but not in cerebral cortex. Expressed specifically in post-mitotic neurons (at protein level).

Its subcellular location is the nucleus. Muscle-specific component of the BAF complex, a multiprotein complex involved in transcriptional activation and repression of select genes by chromatin remodeling (alteration of DNA-nucleosome topology). Specifically binds acetylated lysines on histone 3 and 4 (H3K14ac, H3K9ac, H4K5ac, H4K8ac, H4K12ac, H4K16ac). In the complex, it acts as a tissue-specific anchor between histone acetylations and methylations and chromatin remodeling. It thereby probably plays an essential role in heart and skeletal muscle development. Belongs to the neuron-specific chromatin remodeling complex (nBAF complex). During neural development a switch from a stem/progenitor to a post-mitotic chromatin remodeling mechanism occurs as neurons exit the cell cycle and become committed to their adult state. The transition from proliferating neural stem/progenitor cells to post-mitotic neurons requires a switch in subunit composition of the npBAF and nBAF complexes. As neural progenitors exit mitosis and differentiate into neurons, npBAF complexes which contain ACTL6A/BAF53A and PHF10/BAF45A, are exchanged for homologous alternative ACTL6B/BAF53B and DPF1/BAF45B or DPF3/BAF45C subunits in neuron-specific complexes (nBAF). The npBAF complex is essential for the self-renewal/proliferative capacity of the multipotent neural stem cells. The nBAF complex along with CREST plays a role regulating the activity of genes essential for dendrite growth. In terms of biological role, acts as a regulator of myogenesis in cooperation with HDGFL2. Mediates the interaction of HDGFL2 with the BAF complex. HDGFL2-DPF3a activate myogenic genes by increasing chromatin accessibility through recruitment of SMARCA4/BRG1/BAF190A (ATPase subunit of the BAF complex) to myogenic gene promoters. The polypeptide is Zinc finger protein DPF3 (Dpf3) (Mus musculus (Mouse)).